The following is a 193-amino-acid chain: Glycerol-3-phosphate acyltransferase (193 aa).

Transmembrane regions (helical) follow at residues 2-22 (AFIISIIIAYLLGSLSFAVIV), 51-71 (QAAFYVLLGDAAKGLIAVLIA), 78-98 (GVSLAFVGLVAVLGHLFPVYF), 112-132 (VLLGLSFWIGLFVIATWVIVV), and 154-174 (IIAGRTDYLFPVLIIAILIIW).

Belongs to the PlsY family. As to quaternary structure, probably interacts with PlsX.

The protein resides in the cell inner membrane. The catalysed reaction is an acyl phosphate + sn-glycerol 3-phosphate = a 1-acyl-sn-glycero-3-phosphate + phosphate. It participates in lipid metabolism; phospholipid metabolism. In terms of biological role, catalyzes the transfer of an acyl group from acyl-phosphate (acyl-PO(4)) to glycerol-3-phosphate (G3P) to form lysophosphatidic acid (LPA). This enzyme utilizes acyl-phosphate as fatty acyl donor, but not acyl-CoA or acyl-ACP. This Coxiella burnetii (strain CbuK_Q154) (Coxiella burnetii (strain Q154)) protein is Glycerol-3-phosphate acyltransferase.